The chain runs to 122 residues: MIYWIFLGLAIATEIIGTLSMKYASISGGMTGHIVMYVMITASYVMLSMAVKRVALGVAYALWEGIGILFITLFSVLWFDEPISALKVLGLVTLIVGIMLVKSGTRKPRKQVTPRGDNHATA.

4 consecutive transmembrane segments (helical) span residues 1-21 (MIYW…TLSM), 31-51 (TGHI…SMAV), 54-74 (VALG…ITLF), and 81-101 (EPIS…IMLV).

The protein belongs to the drug/metabolite transporter (DMT) superfamily. Small multidrug resistance (SMR) (TC 2.A.7.1) family. MdtJ subfamily. In terms of assembly, forms a complex with MdtI.

It localises to the cell inner membrane. Its function is as follows. Catalyzes the excretion of spermidine. This chain is Spermidine export protein MdtJ, found in Serratia proteamaculans (strain 568).